The sequence spans 927 residues: SPX and EXS domain-containing protein 5 (927 aa).

An SPX domain is found at Met1–Ser460. Disordered stretches follow at residues Lys54 to Asn78, Lys204 to Gln239, Pro257 to Pro305, and Ser326 to Asn355. Composition is skewed to low complexity over residues Pro60–Asn78 and Leu208–Asn224. The segment covering Pro257–Gly270 has biased composition (polar residues). Residues Leu286–Asn299 are compositionally biased toward acidic residues. Transmembrane regions (helical) follow at residues Phe516–Ile536, Val553–Val573, Ile597–Trp617, Pro636–Leu656, Phe682–Val702, Leu769–Trp789, Phe845–Thr862, and Gln869–Leu889. Residues Gly717–Asn927 enclose the EXS domain.

Belongs to the SYG1 (TC 2.A.94) family.

The protein localises to the membrane. This chain is SPX and EXS domain-containing protein 5, found in Dictyostelium discoideum (Social amoeba).